The sequence spans 238 residues: Serine protease SplA (238 aa).

Positions 1-38 (MNKNVMVKGLTALTILTILTSLGFAENISNQPHSIAKA) are cleaved as a signal peptide. Active-site charge relay system residues include His77, Asp116, and Ser192.

It belongs to the peptidase S1B family.

The protein localises to the secreted. The sequence is that of Serine protease SplA (splA) from Staphylococcus aureus (strain COL).